Reading from the N-terminus, the 394-residue chain is MHFAIPLEYQSELEATEPVDVGTDEEIISSIEQYRPVTSEKNIWAFWDSGILSMPSWCKRNVIGWARICGADWTIRVLDMKPNSPNHVLKFIDRDMLPEAFLSGTMDGHHTGQHSADFIRGPLLHHYGGVSMDVGCLLIRHIDRICWDLLADPDSPYEIAVPVLYDQTIANHFIAARKNNIFIEKWHQLFLHLWNGRTHQQGISDSPLLGFIKDIRYDDATDFHWDWSVPVPQFLEYIAQVLCWQRLCLIRDTGDGFKSSEYWQRNVLCIDSLNEVWGGEKTLGFDGIGPRMYNLLTTRLDADPDSTAYKDAYKLVWRLLTRSSFQKVTRAKNLTYTPHLGTLWDQNEGKDCIPGSFGELLRYGPVHFRQKRENIEQLEASEPRTLIEKGLLEV.

Belongs to the afumC glycosyltransferase family.

The protein operates within secondary metabolite biosynthesis. Probable glycosyl transferase; part of the gene cluster that mediates the biosynthesis of cytokinins such as fusatin, fusatinic acids or 8-oxofusatin, known for their growth promoting and anti-senescence activities toward host plants. FCK1 is a bifunctional enzyme that performs the first steps in the biosynthesis of Fusarium cytokinins. It first condenses adenosine monophosphate (AMP) with dimethylallyl diphosphate (DMAPP) to yield isoprenyl adenosine monophosphate. It then catalyzes the removal of the phosphoribose to produce isopentenylaldehyde. The cytochrome P450 monooxygenase then converts isopentenylaldehyde to trans-zeatin. A condensation step converts trans-zeatin to fusatin which is further modified to produce fusatinic acid. The mechanism for oxidation of fusatin to fusatinic acid remains unknown. 8-oxofusatin could be produced through several pathways, via direct oxygenation of fusatin, or via the 8-oxo-pentenyladenine intermediate which itself must arise from either the prenylation of 8-oxo-AMP by FCK1 and/or oxygenation of isopentenylaldehyde. Both the FCK3 and FCK4 enzymes act downstream of the identified cytokinins to produce yet unidentified compounds. The sequence is that of Probable glycosyltransferase FCK3 from Fusarium pseudograminearum (strain CS3096) (Wheat and barley crown-rot fungus).